Reading from the N-terminus, the 464-residue chain is Glutamate--tRNA ligase (464 aa).

A 'HIGH' region motif is present at residues 11-21; it reads PSPTGYLHIGG. Residues 253–257 carry the 'KMSKS' region motif; the sequence is KLSKR. Residue Lys256 coordinates ATP.

Belongs to the class-I aminoacyl-tRNA synthetase family. Glutamate--tRNA ligase type 1 subfamily. As to quaternary structure, monomer.

The protein resides in the cytoplasm. The enzyme catalyses tRNA(Glu) + L-glutamate + ATP = L-glutamyl-tRNA(Glu) + AMP + diphosphate. Its function is as follows. Catalyzes the attachment of glutamate to tRNA(Glu) in a two-step reaction: glutamate is first activated by ATP to form Glu-AMP and then transferred to the acceptor end of tRNA(Glu). The sequence is that of Glutamate--tRNA ligase from Metamycoplasma arthritidis (strain 158L3-1) (Mycoplasma arthritidis).